Consider the following 221-residue polypeptide: Uracil-DNA glycosylase 1 (221 aa).

The active-site Proton acceptor is aspartate 61.

This sequence belongs to the uracil-DNA glycosylase (UDG) superfamily. UNG family.

The protein resides in the cytoplasm. The catalysed reaction is Hydrolyzes single-stranded DNA or mismatched double-stranded DNA and polynucleotides, releasing free uracil.. Its function is as follows. Excises uracil residues from the DNA which can arise as a result of misincorporation of dUMP residues by DNA polymerase or due to deamination of cytosine. The protein is Uracil-DNA glycosylase 1 of Listeria monocytogenes serotype 4b (strain F2365).